We begin with the raw amino-acid sequence, 233 residues long: Type IV secretion system protein PtlE homolog (233 aa).

Residues 42–62 (VAWAALAVTALSLIAIATMLP) form a helical membrane-spanning segment.

Belongs to the virB8 family.

Its subcellular location is the cell inner membrane. The protein is Type IV secretion system protein PtlE homolog (ptlE) of Bordetella parapertussis (strain 12822 / ATCC BAA-587 / NCTC 13253).